Consider the following 906-residue polypeptide: Protein translocase subunit SecA (906 aa).

ATP-binding positions include glutamine 87, 105-109, and aspartate 512; that span reads GEGKT. The segment at 879–906 is disordered; that stretch reads REGEKIGRNDPCPCGSGQKYKQCHGKLS. The Zn(2+) site is built by cysteine 890, cysteine 892, cysteine 901, and histidine 902.

This sequence belongs to the SecA family. In terms of assembly, monomer and homodimer. Part of the essential Sec protein translocation apparatus which comprises SecA, SecYEG and auxiliary proteins SecDF-YajC and YidC. It depends on Zn(2+) as a cofactor.

It localises to the cell inner membrane. It is found in the cytoplasm. It carries out the reaction ATP + H2O + cellular proteinSide 1 = ADP + phosphate + cellular proteinSide 2.. In terms of biological role, part of the Sec protein translocase complex. Interacts with the SecYEG preprotein conducting channel. Has a central role in coupling the hydrolysis of ATP to the transfer of proteins into and across the cell membrane, serving both as a receptor for the preprotein-SecB complex and as an ATP-driven molecular motor driving the stepwise translocation of polypeptide chains across the membrane. The chain is Protein translocase subunit SecA from Shewanella frigidimarina (strain NCIMB 400).